The sequence spans 44 residues: Photosystem I reaction center subunit IX (44 aa).

The helical transmembrane segment at 7–27 (YLSVAPVLSTLWFGSLAGLLI) threads the bilayer.

This sequence belongs to the PsaJ family.

The protein resides in the plastid. It is found in the chloroplast thylakoid membrane. Functionally, may help in the organization of the PsaE and PsaF subunits. The sequence is that of Photosystem I reaction center subunit IX from Fagopyrum esculentum subsp. ancestrale (Wild buckwheat).